The sequence spans 496 residues: Zinc finger protein PLAGL2 (496 aa).

C2H2-type zinc fingers lie at residues 68–92, 98–120, 127–149, 156–178, 191–213, and 219–242; these read YSCP…MATH, HQCM…LQTH, LHCS…LAMH, LSCK…LKAH, HPCD…LVVH, and FLCQ…KKSH.

It belongs to the krueppel C2H2-type zinc-finger protein family.

The protein resides in the nucleus. Functionally, shows weak transcriptional activatory activity. The chain is Zinc finger protein PLAGL2 (PLAGL2) from Homo sapiens (Human).